Reading from the N-terminus, the 876-residue chain is Leucine--tRNA ligase (876 aa).

The short motif at 43–53 (PYPSGRIHMGH) is the 'HIGH' region element. A 'KMSKS' region motif is present at residues 632–636 (KMSKS). Lysine 635 is an ATP binding site.

It belongs to the class-I aminoacyl-tRNA synthetase family.

The protein resides in the cytoplasm. It catalyses the reaction tRNA(Leu) + L-leucine + ATP = L-leucyl-tRNA(Leu) + AMP + diphosphate. This is Leucine--tRNA ligase from Sinorhizobium fredii (strain NBRC 101917 / NGR234).